The following is a 699-amino-acid chain: Mannan-binding lectin serine protease 1 (699 aa).

Positions 1–19 (MRWLLLYYALCFSLSKASA) are cleaved as a signal peptide. The CUB 1 domain maps to 20–138 (HTVELNNMFG…TGFDAHYMAV (119 aa)). Residues 20 to 184 (HTVELNNMFG…HTDNRTCRVE (165 aa)) are homodimerization. The segment at 20 to 184 (HTVELNNMFG…HTDNRTCRVE (165 aa)) is interaction with MBL2. Positions 20 to 278 (HTVELNNMFG…STQSHSVLIL (259 aa)) are interaction with FCN2. A glycan (N-linked (GlcNAc...) asparagine) is linked at Asn49. Positions 68, 76, 121, 123, 139, 140, and 142 each coordinate Ca(2+). A disulfide bridge links Cys73 with Cys91. The region spanning 139–182 (DVDECKEREDEELSCDHYCHNYIGGYYCSCRFGYILHTDNRTCR) is the EGF-like; calcium-binding domain. 4 disulfides stabilise this stretch: Cys143–Cys157, Cys153–Cys166, Cys168–Cys181, and Cys185–Cys212. 3 residues coordinate Ca(2+): Asn159, Tyr160, and Gly163. Position 159 is a (3R)-3-hydroxyasparagine (Asn159). N-linked (GlcNAc...) (complex) asparagine glycosylation occurs at Asn178. The CUB 2 domain maps to 185 to 297 (CSDNLFTQRT…RGWRLSYRAA (113 aa)). Positions 235, 245, 282, and 284 each coordinate Ca(2+). Cysteines 242 and 260 form a disulfide. Sushi domains lie at 299–364 (NECP…TCKI) and 365–434 (VDCR…TCLP). Disulfide bonds link Cys301-Cys349, Cys329-Cys362, Cys367-Cys414, Cys397-Cys432, Cys436-Cys572, and Cys475-Cys491. Asn385 is a glycosylation site (N-linked (GlcNAc...) (complex) asparagine). A glycan (N-linked (GlcNAc...) asparagine) is linked at Asn407. Residues 449–696 (IFNGRPAQKG…NKDWIQRVTG (248 aa)) form the Peptidase S1 domain. Residue His490 is the Charge relay system of the active site. An N-linked (GlcNAc) asparagine glycan is attached at Leu533. The active-site Charge relay system is the Asp552. Glu599 is a glycosylation site (N-linked (GlcNAc) asparagine). Disulfide bonds link Cys614–Cys631 and Cys642–Cys672. Catalysis depends on Ser646, which acts as the Charge relay system.

The protein belongs to the peptidase S1 family. As to quaternary structure, homodimer. Interacts with the oligomeric lectins MBL2, FCN2 and FCN3; triggers the lectin pathway of complement through activation of C3. Interacts with SERPING1. Interacts with COLEC11; probably triggers the lectin pathway of complement. Post-translationally, the iron and 2-oxoglutarate dependent 3-hydroxylation of aspartate and asparagine is (R) stereospecific within EGF domains. N-glycosylated. Some N-linked glycan are of the complex-type. In terms of processing, autoproteolytic processing of the proenzyme produces the active enzyme composed on the heavy and the light chain held together by a disulfide bond. Isoform 1 but not isoform 2 is activated through autoproteolytic processing. Protein of the plasma which is primarily expressed by liver.

It is found in the secreted. With respect to regulation, inhibited by SERPING1 and A2M. Functionally, functions in the lectin pathway of complement, which performs a key role in innate immunity by recognizing pathogens through patterns of sugar moieties and neutralizing them. The lectin pathway is triggered upon binding of mannan-binding lectin (MBL) and ficolins to sugar moieties which leads to activation of the associated proteases MASP1 and MASP2. Functions as an endopeptidase and may activate MASP2 or C2 or directly activate C3 the key component of complement reaction. Isoform 2 may have an inhibitory effect on the activation of the lectin pathway of complement or may cleave IGFBP5. Also plays a role in development. This chain is Mannan-binding lectin serine protease 1 (MASP1), found in Homo sapiens (Human).